The chain runs to 59 residues: Protein QUA-QUINE STARCH (59 aa).

In terms of tissue distribution, expressed in hypocotyls, leaves, vasculature, hydathodes, trichomes, pedicels, sepals, filaments, mature pollen, stigma papillae, styles, siliques, root and shoot tips, but not in shoot meristem, petals or root epidermis.

Its subcellular location is the cytoplasm. Functionally, involved in regulating carbon and nitrogen allocation to starch and protein. The polypeptide is Protein QUA-QUINE STARCH (Arabidopsis thaliana (Mouse-ear cress)).